Reading from the N-terminus, the 557-residue chain is Pectinesterase/pectinesterase inhibitor 18 (557 aa).

The first 34 residues, 1–34 (MSNSNQPLLSKPKSLKHKNLCLVLSFVAILGSVA), serve as a signal peptide directing secretion. The interval 47 to 203 (NNDDSLLTTS…VSRARVALAI (157 aa)) is pectinesterase inhibitor 18. Residues 246–543 (NVVVAKDGTG…FTVAKLIQGG (298 aa)) form a pectinesterase 18 region. Residues threonine 321 and glutamine 351 each contribute to the substrate site. Aspartate 374 functions as the Proton donor; for pectinesterase activity in the catalytic mechanism. Catalysis depends on aspartate 395, which acts as the Nucleophile; for pectinesterase activity. Residues arginine 463 and tryptophan 465 each contribute to the substrate site.

In the N-terminal section; belongs to the PMEI family. This sequence in the C-terminal section; belongs to the pectinesterase family. In terms of tissue distribution, expressed in siliques, flowers, floral stems, rosette leaves and roots.

Its subcellular location is the secreted. It is found in the cell wall. It catalyses the reaction [(1-&gt;4)-alpha-D-galacturonosyl methyl ester](n) + n H2O = [(1-&gt;4)-alpha-D-galacturonosyl](n) + n methanol + n H(+). The catalysed reaction is Endohydrolysis of the N-glycosidic bond at one specific adenosine on the 28S rRNA.. It participates in glycan metabolism; pectin degradation; 2-dehydro-3-deoxy-D-gluconate from pectin: step 1/5. Its function is as follows. Acts in the modification of cell walls via demethylesterification of cell wall pectin. Inhibits the elongation phase of protein synthesis. This chain is Pectinesterase/pectinesterase inhibitor 18 (PME18), found in Arabidopsis thaliana (Mouse-ear cress).